The primary structure comprises 1270 residues: DNA-directed RNA polymerase subunit beta (1270 aa).

The protein belongs to the RNA polymerase beta chain family. In terms of assembly, the RNAP catalytic core consists of 2 alpha, 1 beta, 1 beta' and 1 omega subunit. When a sigma factor is associated with the core the holoenzyme is formed, which can initiate transcription.

It carries out the reaction RNA(n) + a ribonucleoside 5'-triphosphate = RNA(n+1) + diphosphate. In terms of biological role, DNA-dependent RNA polymerase catalyzes the transcription of DNA into RNA using the four ribonucleoside triphosphates as substrates. In Phocaeicola vulgatus (strain ATCC 8482 / DSM 1447 / JCM 5826 / CCUG 4940 / NBRC 14291 / NCTC 11154) (Bacteroides vulgatus), this protein is DNA-directed RNA polymerase subunit beta.